The sequence spans 132 residues: Small ribosomal subunit protein uS11 (132 aa).

Belongs to the universal ribosomal protein uS11 family. In terms of assembly, part of the 30S ribosomal subunit.

In terms of biological role, located on the platform of the 30S subunit. The chain is Small ribosomal subunit protein uS11 (rps11) from Korarchaeum cryptofilum (strain OPF8).